A 277-amino-acid chain; its full sequence is Large ribosomal subunit protein mL46 (277 aa).

Lysine 228 carries the N6-acetyllysine modification.

The protein belongs to the mitochondrion-specific ribosomal protein mL46 family. As to quaternary structure, component of the mitochondrial ribosome large subunit (39S) which comprises a 16S rRNA and about 50 distinct proteins.

It is found in the mitochondrion. The chain is Large ribosomal subunit protein mL46 (MRPL46) from Bos taurus (Bovine).